Reading from the N-terminus, the 269-residue chain is Zinc finger protein SNAI2 (269 aa).

Residues methionine 1–serine 20 are SNAG domain. The tract at residues serine 81–lysine 117 is disordered. C2H2-type zinc fingers lie at residues phenylalanine 129–histidine 151, phenylalanine 160–histidine 182, cysteine 186–histidine 208, and phenylalanine 214–histidine 236. The C2H2-type 5; atypical zinc finger occupies tyrosine 242–cysteine 265.

It belongs to the snail C2H2-type zinc-finger protein family. Interacts (via SNAG domain) with LIMD1 (via LIM domains), WTIP (via LIM domains) and AJUBA (via LIM domains). Interacts (via zinc fingers) with KPNA2, KPNB1, and TNPO1. May interact (via zinc fingers) with IPO7. Post-translationally, phosphorylated by GSK3B. Once phosphorylated, it becomes a target for ubiquitination. Ubiquitinated by the SCF(FBXO11) complex; ubiquitination requires previous GSK3B-mediated SNAI2 phosphorylation.

The protein localises to the nucleus. The protein resides in the cytoplasm. In terms of biological role, transcriptional repressor that modulates both activator-dependent and basal transcription. Involved in the generation and migration of neural crest cells. Plays a role in mediating RAF1-induced transcriptional repression of the TJ protein, occludin (OCLN) and subsequent oncogenic transformation of epithelial cells. Represses BRCA2 expression by binding to its E2-box-containing silencer and recruiting CTBP1 and HDAC1 in breast cells. In epidermal keratinocytes, binds to the E-box in ITGA3 promoter and represses its transcription. Involved in the regulation of ITGB1 and ITGB4 expression and cell adhesion and proliferation in epidermal keratinocytes. Binds to E-box2 domain of BSG and activates its expression during TGFB1-induced epithelial-mesenchymal transition (EMT) in hepatocytes. Represses E-Cadherin/CDH1 transcription via E-box elements. Involved in osteoblast maturation. Binds to RUNX2 and SOC9 promoters and may act as a positive and negative transcription regulator, respectively, in osteoblasts. Binds to CXCL12 promoter via E-box regions in mesenchymal stem cells and osteoblasts. Plays an essential role in TWIST1-induced EMT and its ability to promote invasion and metastasis. The polypeptide is Zinc finger protein SNAI2 (Snai2) (Mus musculus (Mouse)).